The following is a 495-amino-acid chain: Probable cytosol aminopeptidase (495 aa).

Mn(2+)-binding residues include Lys266 and Asp271. Lys278 is a catalytic residue. The Mn(2+) site is built by Asp289, Asp348, and Glu350. The active site involves Arg352.

Belongs to the peptidase M17 family. The cofactor is Mn(2+).

Its subcellular location is the cytoplasm. The catalysed reaction is Release of an N-terminal amino acid, Xaa-|-Yaa-, in which Xaa is preferably Leu, but may be other amino acids including Pro although not Arg or Lys, and Yaa may be Pro. Amino acid amides and methyl esters are also readily hydrolyzed, but rates on arylamides are exceedingly low.. The enzyme catalyses Release of an N-terminal amino acid, preferentially leucine, but not glutamic or aspartic acids.. Its function is as follows. Presumably involved in the processing and regular turnover of intracellular proteins. Catalyzes the removal of unsubstituted N-terminal amino acids from various peptides. The chain is Probable cytosol aminopeptidase from Pseudomonas paraeruginosa (strain DSM 24068 / PA7) (Pseudomonas aeruginosa (strain PA7)).